The primary structure comprises 1007 residues: MTSPVQWGTFFHQCLLHRIDANEFRNLSKLLLQKCPIAETALLDALLQTRSESRIKWDPLLPLYIDCLCRTGRVRTSTVLTSLLKYSSIHDKPQLSTSEGKDGSKCYTLMTDIRVIQDTMLSVSTGSTPKTNAEAVAIFFAIIDWIHAVASWHNSHFDPGQHSSGIMSSPDVVSLFESLGILLAALSGTGKGLEVLSADSHEGLKVKLGQALSAYLPLCVEVSLPLRNRLDGLQKEFNLYGERVPKSLDVPMMENMNVNALQFEASVMDGPVINSRAGLYVFINAMLVGRPLVDDGMLINYLANRYGGHYEALVEEILTASFDVLSNGMYRNESSRMMFVFRSFLVNKLPPFFAAMLASTMVSIPMEMCISHALSRLDPNTFPSFSQMFEMQGNTVLSDVRQEFLFACASHKLIPESSIERLLGENPMQTLPVGYNKDELVSQINANPERAEQLINEIESMEGNAGAIIGAITEVMHNLCNQKETMTLKNICNSLSRRPQALDVVLIFRNPKQVLQPLCALLDSWHWDEDQGEYQPVYDEFGSILLLVLAFKYRFDLRPADLGISSSDSFVLRLLERGSCSQKLDALDEKQNKNLGSWIAALFIAEGISEETMSACSPQEFYLLVATLFSQSLEACETGKLEFDTLKGGFEYLLEPFLLPSLIFALTWLGDHIWEMELDPSIPLKVLHSLVNPSSISGEAREIHRTVLNIAARTLEEQLKDVRTRHPSRTDIKPILDSLEPCLSFQLVGSSHRSELEGWTTHSSGGLLGSIRSTFQSLVLWSTNPEVSMAPPPYTHRQLIAGVRMLGASRVLPALIEELKLQTEAGNGPLALDLAATLICAPMAETFSVEQNSHQPVDPNKEALPRCGILTLRDVLALQHENVPKISEKDPLRAEVLVRLYRRVNALLAPPSQVPNLDVNNIIQNMQLGGVGVGAGQMELDATGAADHGVGPDDAENIHRMIDNAAAAAGLDSSGTGLDTSIDDVLNAADMAVGNPEFLDLDMEGMF.

Belongs to the Mediator complex subunit 5 family. As to quaternary structure, component of the Mediator complex.

The protein resides in the nucleus. Component of the Mediator complex, a coactivator involved in the regulated transcription of nearly all RNA polymerase II-dependent genes. Mediator functions as a bridge to convey information from gene-specific regulatory proteins to the basal RNA polymerase II transcription machinery. Mediator is recruited to promoters by direct interactions with regulatory proteins and serves as a scaffold for the assembly of a functional preinitiation complex with RNA polymerase II and the general transcription factors. In Aspergillus fumigatus (strain ATCC MYA-4609 / CBS 101355 / FGSC A1100 / Af293) (Neosartorya fumigata), this protein is Mediator of RNA polymerase II transcription subunit 5 (nut1).